The primary structure comprises 585 residues: Protein cereblon (585 aa).

Disordered regions lie at residues 1–109 (MDEE…DLES) and 156–195 (FSQERRRSRTSEETSQEAAEQPVDPPPQQPPRPPIDIGFD). A compositionally biased stretch (polar residues) spans 80 to 95 (QDDTASEGSHPSSDMS). Residues 158-167 (QERRRSRTSE) show a composition bias toward basic and acidic residues. Residues 178–189 (VDPPPQQPPRPP) show a composition bias toward pro residues. Residues 225–451 (HMLIFLHQHI…LIKSTFKDET (227 aa)) form the Lon N-terminal domain. Residues 450–559 (ETLFFCRYCN…LAGSSVRIGK (110 aa)) form the CULT domain. 4 residues coordinate Zn(2+): C455, C458, C524, and C527.

The protein belongs to the CRBN family. In terms of assembly, likely a component of a DCX (DDB1-CUL4-X-box) protein ligase complex. May interact with pic/DDB1. In terms of processing, ubiquitinated. As to expression, expressed in the fat body (at protein level).

It localises to the nucleus. Its pathway is protein modification; protein ubiquitination. In terms of biological role, substrate recognition component of a DCX (DDB1-CUL4-X-box) E3 protein ligase complex that mediates the ubiquitination and subsequent proteasomal degradation of target proteins. Has an essential role in mediating growth by negatively regulating insulin signaling. It also has a role in maintaining presynaptic function in the neuromuscular junction synapses of third-instar larvae. In Drosophila melanogaster (Fruit fly), this protein is Protein cereblon.